The primary structure comprises 617 residues: V-type proton ATPase catalytic subunit A (617 aa).

Thr-136 is subject to Phosphothreonine. Gly-250–Thr-257 contacts ATP. A Phosphoserine; by AMPK modification is found at Ser-384.

This sequence belongs to the ATPase alpha/beta chains family. V-ATPase is a heteromultimeric enzyme made up of two complexes: the ATP-hydrolytic V1 complex and the proton translocation V0 complex. The V1 complex consists of three catalytic AB heterodimers that form a heterohexamer, three peripheral stalks each consisting of EG heterodimers, one central rotor including subunits D and F, and the regulatory subunits C and H. The proton translocation complex V0 consists of the proton transport subunit a, a ring of proteolipid subunits c9c'', rotary subunit d, subunits e and f, and the accessory subunits ATP6AP1/Ac45 and ATP6AP2/PRR. Interacts with the V0 complex V-ATPase subunit a4 ATP6V0A4. Interacts with WFS1. Interacts with alpha-crystallin B chain/CRYAB and with MTOR, forming a ternary complex. In terms of processing, phosphorylation at Ser-384 by AMPK down-regulates its enzyme activity. In terms of tissue distribution, expressed in brain (at protein level).

The protein localises to the cytoplasm. It localises to the cytosol. Its subcellular location is the cytoplasmic vesicle. The protein resides in the secretory vesicle. It is found in the clathrin-coated vesicle membrane. The protein localises to the lysosome. It carries out the reaction ATP + H2O + 4 H(+)(in) = ADP + phosphate + 5 H(+)(out). ATP hydrolysis occurs at the interface between the nucleotide-binding domains of subunits A and B. ATP hydrolysis triggers a conformational change in the subunits D and F, which induces a shift of subunit d. The c-ring is subsequently rotated and results in a continuous proton translocation across the membrane. The V-ATPase is inhibited by bafilomycin A. Functionally, catalytic subunit of the V1 complex of vacuolar(H+)-ATPase (V-ATPase), a multisubunit enzyme composed of a peripheral complex (V1) that hydrolyzes ATP and a membrane integral complex (V0) that translocates protons. V-ATPase is responsible for acidifying and maintaining the pH of intracellular compartments and in some cell types, is targeted to the plasma membrane, where it is responsible for acidifying the extracellular environment. In aerobic conditions, involved in intracellular iron homeostasis, thus triggering the activity of Fe(2+) prolyl hydroxylase (PHD) enzymes, and leading to HIF1A hydroxylation and subsequent proteasomal degradation. May play a role in neurite development and synaptic connectivity. This Bos taurus (Bovine) protein is V-type proton ATPase catalytic subunit A (ATP6V1A).